Consider the following 295-residue polypeptide: Ribosomal RNA small subunit methyltransferase H (295 aa).

S-adenosyl-L-methionine-binding positions include 32 to 34, Asp50, Phe77, Asp98, and Gln105; that span reads GGY. Positions 275–295 are disordered; the sequence is KEISENTRSRSAKLRGIVKEE.

The protein belongs to the methyltransferase superfamily. RsmH family.

Its subcellular location is the cytoplasm. The enzyme catalyses cytidine(1402) in 16S rRNA + S-adenosyl-L-methionine = N(4)-methylcytidine(1402) in 16S rRNA + S-adenosyl-L-homocysteine + H(+). Functionally, specifically methylates the N4 position of cytidine in position 1402 (C1402) of 16S rRNA. This Anaplasma phagocytophilum (strain HZ) protein is Ribosomal RNA small subunit methyltransferase H.